The following is a 160-amino-acid chain: Negative modulator of initiation of replication (160 aa).

The protein belongs to the SeqA family. As to quaternary structure, homodimer. Polymerizes to form helical filaments.

It is found in the cytoplasm. Negative regulator of replication initiation, which contributes to regulation of DNA replication and ensures that replication initiation occurs exactly once per chromosome per cell cycle. Binds to pairs of hemimethylated GATC sequences in the oriC region, thus preventing assembly of replication proteins and re-initiation at newly replicated origins. Repression is relieved when the region becomes fully methylated. The chain is Negative modulator of initiation of replication from Idiomarina loihiensis (strain ATCC BAA-735 / DSM 15497 / L2-TR).